Here is a 152-residue protein sequence, read N- to C-terminus: Large ribosomal subunit protein eL29 (152 aa).

Residues 1–26 (MAKSKNHTTHNQSRKWHRNGIKKPRS) show a composition bias toward basic residues. The disordered stretch occupies residues 1 to 32 (MAKSKNHTTHNQSRKWHRNGIKKPRSQRYESL). Lys-5 is subject to N6-methyllysine. Phosphoserine is present on Ser-31. Lys-33 carries the post-translational modification N6-acetyllysine. Positions 119 to 152 (CRPKSQAKASTKAKPPAAAAPAAKGAQAPTKAPE) are disordered. The span at 121–152 (PKSQAKASTKAKPPAAAAPAAKGAQAPTKAPE) shows a compositional bias: low complexity.

Belongs to the eukaryotic ribosomal protein eL29 family. Component of the large ribosomal subunit.

It is found in the cytoplasm. Its function is as follows. Component of the large ribosomal subunit. The ribosome is a large ribonucleoprotein complex responsible for the synthesis of proteins in the cell. This chain is Large ribosomal subunit protein eL29 (RPL29), found in Bos taurus (Bovine).